The chain runs to 242 residues: Small ribosomal subunit protein uS3 (242 aa).

The 72-residue stretch at 39–110 (IRKFIHKKYG…QVRINVVEVE (72 aa)) folds into the KH type-2 domain. Positions 221 to 242 (GASPRRRASRRPQQFEDRSNEG) are disordered. The span at 233 to 242 (QQFEDRSNEG) shows a compositional bias: basic and acidic residues.

It belongs to the universal ribosomal protein uS3 family. Part of the 30S ribosomal subunit. Forms a tight complex with proteins S10 and S14.

Binds the lower part of the 30S subunit head. Binds mRNA in the 70S ribosome, positioning it for translation. The polypeptide is Small ribosomal subunit protein uS3 (Parasynechococcus marenigrum (strain WH8102)).